The chain runs to 208 residues: MASSLLAGERLVRALGPGGELEPERLPRKLRAELEAALGKKHKGGDSSSGPQRLVSFRLIRDLHQHLRERDSKLYLHELLEGSEIYLPEVVKPPRNPELVARLEKIKIQLANEEYKRITRNVTCQDTRHGGTLSDLGKQVRSLKALVITIFNFIVTVVAAFVCTYLGSQYIFTEMASRVLAALIVASVVGLAELYVMVRAMEGELGEL.

An N-acetylalanine modification is found at A2. The next 2 helical transmembrane spans lie at L146 to L166 and V179 to R199.

Accessory component of the multisubunit proton-transporting vacuolar (V)-ATPase protein pump.

The protein localises to the cytoplasmic vesicle. It localises to the COPI-coated vesicle membrane. It is found in the endoplasmic reticulum-Golgi intermediate compartment membrane. Its subcellular location is the endoplasmic reticulum membrane. Accessory component of the proton-transporting vacuolar (V)-ATPase protein pump involved in intracellular iron homeostasis. In aerobic conditions, required for intracellular iron homeostasis, thus triggering the activity of Fe(2+) prolyl hydroxylase (PHD) enzymes, and leading to HIF1A hydroxylation and subsequent proteasomal degradation. Necessary for endolysosomal acidification and lysosomal degradation. May be involved in Golgi homeostasis. Binds 20(S)-hydroxycholesterol (20(S)-OHC). The sequence is that of Vacuolar ATPase assembly protein VMA12 from Homo sapiens (Human).